Here is a 383-residue protein sequence, read N- to C-terminus: ATP phosphoribosyltransferase regulatory subunit (383 aa).

It belongs to the class-II aminoacyl-tRNA synthetase family. HisZ subfamily. In terms of assembly, heteromultimer composed of HisG and HisZ subunits.

Its subcellular location is the cytoplasm. It functions in the pathway amino-acid biosynthesis; L-histidine biosynthesis; L-histidine from 5-phospho-alpha-D-ribose 1-diphosphate: step 1/9. Functionally, required for the first step of histidine biosynthesis. May allow the feedback regulation of ATP phosphoribosyltransferase activity by histidine. The protein is ATP phosphoribosyltransferase regulatory subunit of Cupriavidus necator (strain ATCC 17699 / DSM 428 / KCTC 22496 / NCIMB 10442 / H16 / Stanier 337) (Ralstonia eutropha).